The sequence spans 339 residues: MLDPRAQTLLKTLIERYIAEGQPVGSRTLSRYSGLELSPATIRNVMSDLEELGLVISPHTSAGRIPTPRGYRLFVDTMLTVEPSADEDAVMRAVKTTLQPGEPQKVVAAAASVLSNLSQFAGVILTPRRSHVFKQIEFLRLSDKRILLIIVTPEGDVQNRIMATQRDFTPSQLVEASNYINAHFAGLSFDEVRRRLREEIDELRGDMTTLMHAAVTASTDVTDTGETVLISGERKLLEVADLSSDMARLRKLFDVFDQKTSLLQLLDVSSHAQGVQIFIGGESNLVPIEEMSVVTAPYEVNGKIVGTLGVIGPTRMAYNRVIPIVDITARLLSMTLSQQ.

It belongs to the HrcA family.

Its function is as follows. Negative regulator of class I heat shock genes (grpE-dnaK-dnaJ and groELS operons). Prevents heat-shock induction of these operons. In Paraburkholderia phymatum (strain DSM 17167 / CIP 108236 / LMG 21445 / STM815) (Burkholderia phymatum), this protein is Heat-inducible transcription repressor HrcA.